A 211-amino-acid chain; its full sequence is Large ribosomal subunit protein uL4 (211 aa).

Disordered regions lie at residues 1 to 28 (MAQAQVFDARTGRRSEMELKGPRFETEP) and 48 to 99 (TAST…GPRY). Residues 10-28 (RTGRRSEMELKGPRFETEP) show a composition bias toward basic and acidic residues.

This sequence belongs to the universal ribosomal protein uL4 family. In terms of assembly, part of the 50S ribosomal subunit.

One of the primary rRNA binding proteins, this protein initially binds near the 5'-end of the 23S rRNA. It is important during the early stages of 50S assembly. It makes multiple contacts with different domains of the 23S rRNA in the assembled 50S subunit and ribosome. In terms of biological role, forms part of the polypeptide exit tunnel. This is Large ribosomal subunit protein uL4 from Rubrobacter xylanophilus (strain DSM 9941 / JCM 11954 / NBRC 16129 / PRD-1).